A 490-amino-acid polypeptide reads, in one-letter code: MEPFVVLVLCLSFMLLFSLWRQSCRRRKLPPGPTPLPIIGNMLQIDVKDICKSFTNFSKVYGPVFTVYFGMNPIVVFHGYEAVKEALIDNGEEFSGRGNSPISQRITKGLGIISSNGKRWKEIRRFSLTTLRNFGMGKRSIEDRVQEEAHCLVEELRKTKASPCDPTFILGCAPCNVICSVVFQKRFDYKDQNFLTLMKRFNENFRILNSPWIQVCNNFPLLIDCFPGTHNKVLKNVALTRSYIREKVKEHQASLDVNNPRDFIDCFLIKMEQEKDNQKSEFNIENLVGTVADLFVAGTETTSTTLRYGLLLLLKHPEVTAKVQEEIDHVIGRHRSPCMQDRSHMPYTDAVVHEIQRYSDLVPTGVPHAVTTDTKFRNYLIPKGTTIMALLTSVLHDDKEFPNPNIFDPGHFLDKNGNFKKSDYFMPFSAGKRICAGEGLARMELFLFLTTILQNFNLKSVDDLKNLNTTAVTKGIVSLPPSYQICFIPV.

Substrate is bound by residues Ser100, Asn204, and Arg241. Phosphoserine is present on Ser100. Cys435 is a binding site for heme.

This sequence belongs to the cytochrome P450 family. Heme is required as a cofactor.

The protein resides in the endoplasmic reticulum membrane. The protein localises to the microsome membrane. The enzyme catalyses an organic molecule + reduced [NADPH--hemoprotein reductase] + O2 = an alcohol + oxidized [NADPH--hemoprotein reductase] + H2O + H(+). The catalysed reaction is (5Z,8Z,11Z,14Z)-eicosatetraenoate + reduced [NADPH--hemoprotein reductase] + O2 = (11R,12S)-epoxy-(5Z,8Z,14Z)-eicosatrienoate + oxidized [NADPH--hemoprotein reductase] + H2O + H(+). It catalyses the reaction (5Z,8Z,11Z,14Z)-eicosatetraenoate + reduced [NADPH--hemoprotein reductase] + O2 = (11S,12R)-epoxy-(5Z,8Z,14Z)-eicosatrienoate + oxidized [NADPH--hemoprotein reductase] + H2O + H(+). It carries out the reaction (5Z,8Z,11Z,14Z)-eicosatetraenoate + reduced [NADPH--hemoprotein reductase] + O2 = (14R,15S)-epoxy-(5Z,8Z,11Z)-eicosatrienoate + oxidized [NADPH--hemoprotein reductase] + H2O + H(+). The enzyme catalyses (5Z,8Z,11Z,14Z)-eicosatetraenoate + reduced [NADPH--hemoprotein reductase] + O2 = (14S,15R)-epoxy-(5Z,8Z,11Z)-eicosatrienoate + oxidized [NADPH--hemoprotein reductase] + H2O + H(+). The catalysed reaction is (5Z,8Z,11Z,14Z,17Z)-eicosapentaenoate + reduced [NADPH--hemoprotein reductase] + O2 = 11,12-epoxy-(5Z,8Z,14Z,17Z)-eicosatetraenoate + oxidized [NADPH--hemoprotein reductase] + H2O + H(+). It catalyses the reaction (5Z,8Z,11Z,14Z,17Z)-eicosapentaenoate + reduced [NADPH--hemoprotein reductase] + O2 = 14,15-epoxy-(5Z,8Z,11Z,17Z)-eicosatetraenoate + oxidized [NADPH--hemoprotein reductase] + H2O + H(+). It carries out the reaction (5Z,8Z,11Z,14Z,17Z)-eicosapentaenoate + reduced [NADPH--hemoprotein reductase] + O2 = (17R,18S)-epoxy-(5Z,8Z,11Z,14Z)-eicosatetraenoate + oxidized [NADPH--hemoprotein reductase] + H2O + H(+). The enzyme catalyses (5Z,8Z,11Z,14Z,17Z)-eicosapentaenoate + reduced [NADPH--hemoprotein reductase] + O2 = (17S,18R)-epoxy-(5Z,8Z,11Z,14Z)-eicosatetraenoate + oxidized [NADPH--hemoprotein reductase] + H2O + H(+). The catalysed reaction is (4Z,7Z,10Z,13Z,16Z,19Z)-docosahexaenoate + reduced [NADPH--hemoprotein reductase] + O2 = (19R,20S)-epoxy-(4Z,7Z,10Z,13Z,16Z)-docosapentaenoate + oxidized [NADPH--hemoprotein reductase] + H2O + H(+). It catalyses the reaction (4Z,7Z,10Z,13Z,16Z,19Z)-docosahexaenoate + reduced [NADPH--hemoprotein reductase] + O2 = (19S,20R)-epoxy-(4Z,7Z,10Z,13Z,16Z)-docosapentaenoate + oxidized [NADPH--hemoprotein reductase] + H2O + H(+). It carries out the reaction all-trans-retinoate + reduced [NADPH--hemoprotein reductase] + O2 = all-trans-4-hydroxyretinoate + oxidized [NADPH--hemoprotein reductase] + H2O + H(+). The enzyme catalyses 17beta-estradiol + reduced [NADPH--hemoprotein reductase] + O2 = 16alpha,17beta-estriol + oxidized [NADPH--hemoprotein reductase] + H2O + H(+). The catalysed reaction is estrone + reduced [NADPH--hemoprotein reductase] + O2 = 16alpha-hydroxyestrone + oxidized [NADPH--hemoprotein reductase] + H2O + H(+). It functions in the pathway steroid metabolism. Its pathway is lipid metabolism; arachidonate metabolism. It participates in cofactor metabolism; retinol metabolism. Functionally, a cytochrome P450 monooxygenase involved in the metabolism of various endogenous substrates, including fatty acids, steroid hormones and vitamins. Mechanistically, uses molecular oxygen inserting one oxygen atom into a substrate, and reducing the second into a water molecule, with two electrons provided by NADPH via cytochrome P450 reductase (NADPH--hemoprotein reductase). Primarily catalyzes the epoxidation of double bonds of polyunsaturated fatty acids (PUFA) with a preference for the last double bond. Catalyzes the hydroxylation of carbon-hydrogen bonds. Metabolizes all trans-retinoic acid toward its 4-hydroxylated form. Displays 16-alpha hydroxylase activity toward estrogen steroid hormones, 17beta-estradiol (E2) and estrone (E1). Plays a role in the oxidative metabolism of xenobiotics. It is the principal enzyme responsible for the metabolism of the anti-cancer drug paclitaxel (taxol). In Homo sapiens (Human), this protein is Cytochrome P450 2C8.